A 294-amino-acid polypeptide reads, in one-letter code: ATP phosphoribosyltransferase (294 aa).

This sequence belongs to the ATP phosphoribosyltransferase family. Long subfamily. It depends on Mg(2+) as a cofactor.

The protein resides in the cytoplasm. It catalyses the reaction 1-(5-phospho-beta-D-ribosyl)-ATP + diphosphate = 5-phospho-alpha-D-ribose 1-diphosphate + ATP. The protein operates within amino-acid biosynthesis; L-histidine biosynthesis; L-histidine from 5-phospho-alpha-D-ribose 1-diphosphate: step 1/9. Feedback inhibited by histidine. In terms of biological role, catalyzes the condensation of ATP and 5-phosphoribose 1-diphosphate to form N'-(5'-phosphoribosyl)-ATP (PR-ATP). Has a crucial role in the pathway because the rate of histidine biosynthesis seems to be controlled primarily by regulation of HisG enzymatic activity. This is ATP phosphoribosyltransferase from Chlorobium phaeobacteroides (strain DSM 266 / SMG 266 / 2430).